A 270-amino-acid chain; its full sequence is tRNA pseudouridine synthase A (270 aa).

The Nucleophile role is filled by aspartate 51. Residue tyrosine 109 coordinates substrate.

The protein belongs to the tRNA pseudouridine synthase TruA family. Homodimer.

It carries out the reaction uridine(38/39/40) in tRNA = pseudouridine(38/39/40) in tRNA. In terms of biological role, formation of pseudouridine at positions 38, 39 and 40 in the anticodon stem and loop of transfer RNAs. In Burkholderia ambifaria (strain ATCC BAA-244 / DSM 16087 / CCUG 44356 / LMG 19182 / AMMD) (Burkholderia cepacia (strain AMMD)), this protein is tRNA pseudouridine synthase A.